A 557-amino-acid polypeptide reads, in one-letter code: 2-succinyl-5-enolpyruvyl-6-hydroxy-3-cyclohexene-1-carboxylate synthase (557 aa).

It belongs to the TPP enzyme family. MenD subfamily. Homodimer. It depends on Mg(2+) as a cofactor. Requires Mn(2+) as cofactor. The cofactor is thiamine diphosphate.

The catalysed reaction is isochorismate + 2-oxoglutarate + H(+) = 5-enolpyruvoyl-6-hydroxy-2-succinyl-cyclohex-3-ene-1-carboxylate + CO2. It functions in the pathway quinol/quinone metabolism; 1,4-dihydroxy-2-naphthoate biosynthesis; 1,4-dihydroxy-2-naphthoate from chorismate: step 2/7. The protein operates within quinol/quinone metabolism; menaquinone biosynthesis. Functionally, catalyzes the thiamine diphosphate-dependent decarboxylation of 2-oxoglutarate and the subsequent addition of the resulting succinic semialdehyde-thiamine pyrophosphate anion to isochorismate to yield 2-succinyl-5-enolpyruvyl-6-hydroxy-3-cyclohexene-1-carboxylate (SEPHCHC). This chain is 2-succinyl-5-enolpyruvyl-6-hydroxy-3-cyclohexene-1-carboxylate synthase, found in Staphylococcus aureus (strain MRSA252).